The following is a 117-amino-acid chain: MRVKRGVAAKRRHKKYLKMAKGFRGSGSTLYRTARERVERSLCMAYVGRKLRKRDMRKLWIQRINAAARLNGMSYSRLIHGLSTAGVTLNRKVLADLAVNDAPAFAKVVEIAKAQVS.

The protein belongs to the bacterial ribosomal protein bL20 family.

Binds directly to 23S ribosomal RNA and is necessary for the in vitro assembly process of the 50S ribosomal subunit. It is not involved in the protein synthesizing functions of that subunit. The protein is Large ribosomal subunit protein bL20 of Maridesulfovibrio salexigens (strain ATCC 14822 / DSM 2638 / NCIMB 8403 / VKM B-1763) (Desulfovibrio salexigens).